Reading from the N-terminus, the 1646-residue chain is MRLPSWLKNSSSWLWTAALSRTVQRRLLAFALRKLIGSILLENVQPEDIDILFSKGVLMLSNLQLNCSFLNAVVSLPMINFTKGTLRRLILRLNVTDIVNLNVELEVNGLSLEIELVPPDESLSSTTYEDAPSQLDILDNVVEYMNKTASQDFEDEVINEGLESEIDGSSHNLLDSILQKCLASTSVLMQDALVYIGTANMSTRLEAKLDFMSFSSVKSNSTSRLLNINGITVSMVRPISKSNAGSSSPPRSEESFVSMDSSSSIVEGFENDLSPSQVTLNESSIISSNREEESFYSVHDSVTQKKTRTSWLIFQCSGEFRLVFSIESSNLLVIESHVPSCVLNINSQVIAFLLYLYGYFLPAPSTPGFSSNKPPLTMLQLDIHISSVQILTHCKLPESQDFSMHNDVDELLHTIPSNGAVFEMKINQIQIFNDNNDIDELTMTFSDLDIFMDSVTLVSFGKSLQSPCSLIFKKLERIVSLFIHIPGGEISLPLGKALLLQESFVEFTNDISNLQNFLSNSDPFKRSIQETFEAPKPFEVEMNQPSFEIIALFDELQLQILNELSTQSLYKLTLRVSHLQFTRKSTGSLSSVLIFVKKIGCQSELFNCENSDWTKVSSSTAFHLSNSLFETHDTTGTSNFAVSIQQEKHYYPVFQPAPTEFSYPEKHFYFAVDNFNVFISKEVVRLFKTLYETIASSLVTPVTPNKLVTSDYKNVLKIRTRTFSLSLLNDDGSSFALKCIRIKHYMCWAGAQLISLSLRLYNVSAEYLSESLEILPVVSFIRNLRNDEKYLLNADFSYALKRSSGSNDNTIFVKITDLGYEHYPTCPWISDLLKTYFPQDPEVPFLAFPDFPFNIKLDLRESIIGLNPRTLEAKLLLYLKSLDVEIDALVASNPLNIRIMAAETVVYIIDKLNQSVLEGKTSVLKREILNSSLHFPGLSIKDTIEFVVKSLGYVEISQLKNLTLSLVVNAEEGVFSTLITVDNLDAQVQSCADSTELLIKVLSDLGSTEDEEISDCYLALPIEDYAKSLTEVDYNFFENRGIDYKSNPTEQSTVLVSSDNDISSQEIKIVDDYYISSNEHSTHASDLASVSSEEFVIDDGSSSIIDISDELQDESSSRDSLKKGIELIEDYYLSQSTSKLESSVEGKNYLLKVKFKDINVNWDLHDGYDWEATRATISSAIEKLCDSSSQNDKISPEAKTLLFQSIVIKSFSKVGRLNINHVSEPIDSDEFADYLSKSISYHLRLGKSKSKKIGIEIKDLQGSFTVYADSNEPNAVLNDLDIGLKDLIIYDHLSTSTWNKFFGRDSRSPSSKNRNQHMNAQIVTVRPLPELNNRELRLEFSVLPCKMYIDQDTLDFLIRFLTFQTPSSSETLNTEPDLPFFQSICINATHVTIDFKFKSADKVGLRSGKLPDLGSLIVMQGSEVFLRQLQIYGLSGAEEFLNALLNVWLQDIRNNQLSKVLNGVVPIRTMFTVGRGIKDIFVSPVRGLQGNHSVGSFRHGIIKFTEKYVNDFLSLNAQGATGTHSLLRQAESYLERGSNASASASRARSYYAEQPETIEQGLRQGYSGLKQGLLGAKSTLMGLPRETRSHKSLGGVAQTVGRKVPLIVLQPMIGATEAVSKTLLGLSNSLQPQRRQDMREKYKRPG.

An ER-targeting domain region spans residues 16-35 (TAALSRTVQRRLLAFALRKL). Residues 26-121 (RLLAFALRKL…LEIELVPPDE (96 aa)) form the Chorein N-terminal domain. Positions 1465 to 1490 (VPIRTMFTVGRGIKDIFVSPVRGLQG) are PAS-targeting domain.

This sequence belongs to the ATG2 family.

It is found in the preautophagosomal structure membrane. Its subcellular location is the endoplasmic reticulum membrane. The catalysed reaction is a 1,2-diacyl-sn-glycero-3-phosphocholine(in) = a 1,2-diacyl-sn-glycero-3-phosphocholine(out). The enzyme catalyses a 1,2-diacyl-sn-glycero-3-phospho-L-serine(in) = a 1,2-diacyl-sn-glycero-3-phospho-L-serine(out). It carries out the reaction a 1,2-diacyl-sn-glycero-3-phosphoethanolamine(in) = a 1,2-diacyl-sn-glycero-3-phosphoethanolamine(out). Lipid transfer protein required for autophagosomes completion and peroxisome degradation. Tethers the edge of the isolation membrane (IM) to the endoplasmic reticulum (ER) and mediates direct lipid transfer from ER to IM for IM expansion. Atg2 binds to the ER exit site (ERES), which is the membrane source for autophagosome formation, using basic residues in its N-terminal region (NR) and to the expanding edge of the IM through its C-terminal region. The latter binding is assisted by an atg18-PtdIns3P interaction. Atg2 then extracts phospholipids from the membrane source using its NR and transfers them to atg9 to the IM through its predicted beta-sheet-rich structure for membrane expansion. Atg2 is also involved in the recruitment of lipids to a restricted region close to the vacuole, termed the vacuole-isolation membrane contact site (VICS), which is also essential for autophagosome formation. May have a role in sporulation. The chain is Autophagy-related protein 2 (atg2) from Schizosaccharomyces pombe (strain 972 / ATCC 24843) (Fission yeast).